Consider the following 120-residue polypeptide: Non-specific lipid-transfer protein 6 (120 aa).

Positions 1 to 26 (MARSMSLKLACVVVLCLLVDAPLAQG) are cleaved as a signal peptide. Cystine bridges form between C57-C102 and C77-C116.

This sequence belongs to the plant LTP family. Specifically expressed in fiber cells.

Its function is as follows. Plant non-specific lipid-transfer proteins transfer phospholipids as well as galactolipids across membranes. May play a role in wax or cutin deposition in the cell walls of expanding epidermal cells and certain secretory tissues. The chain is Non-specific lipid-transfer protein 6 (LTP6) from Gossypium hirsutum (Upland cotton).